Here is a 529-residue protein sequence, read N- to C-terminus: Pre-rRNA-processing protein pro-1 (529 aa).

WD repeat units lie at residues 136–175 and 287–326; these read AHYQ…SADR and GHSD…CLKV. The stretch at 416–518 forms a coiled coil; the sequence is ARNEAAKAEK…LKEINKQMYE (103 aa). The disordered stretch occupies residues 436 to 470; sequence TLGDDEDDAPEVGNQRRKSGKKNKKNRKNQKKNDF. Residues 450–465 are compositionally biased toward basic residues; that stretch reads QRRKSGKKNKKNRKNQ.

The protein belongs to the WD repeat IPI3/WDR18 family. As to quaternary structure, component of the PELP1 complex, composed of at least PELP1, TEX10 and WDR18. The complex interacts with pre-60S ribosome particles.

The protein resides in the nucleus. Its subcellular location is the nucleolus. The protein localises to the nucleoplasm. Component of the PELP1 complex involved in the nucleolar steps of 28S rRNA maturation and the subsequent nucleoplasmic transit of the pre-60S ribosomal subunit. Required for processing ITS2 sequences from rRNA intermediates during 26S rRNA maturation. Required in the soma to promote normal proliferation and prevent germline tumor formation. This chain is Pre-rRNA-processing protein pro-1, found in Caenorhabditis elegans.